Consider the following 471-residue polypeptide: COP9 signalosome complex subunit 1 (471 aa).

In terms of domain architecture, PCI spans 249–411 (CFLLASFDHC…KILYARDVDQ (163 aa)). The interval 445 to 471 (HVKSPPREGSQGELTPANSQSRMSTNM) is disordered. Phosphoserine is present on residues serine 448 and serine 454. The span at 456-471 (GELTPANSQSRMSTNM) shows a compositional bias: polar residues. Residue threonine 459 is modified to Phosphothreonine. Phosphoserine is present on serine 463.

Belongs to the CSN1 family. Component of the CSN complex, composed of COPS1/GPS1, COPS2, COPS3, COPS4, COPS5, COPS6, COPS7 (COPS7A or COPS7B), COPS8 and COPS9. In the complex, it probably interacts directly with COPS2, COPS3, COPS4 and COPS5. Interacts directly with inositol kinase ITPK1. Interacts with CAPN8. Interacts with USP48. Interacts with ASB4; this interaction negatively regulates GPS1. Expressed in the base region of the oxyntic and pyloric mucosae.

It localises to the cytoplasm. The protein localises to the nucleus. Essential component of the COP9 signalosome complex (CSN), a complex involved in various cellular and developmental processes. The CSN complex is an essential regulator of the ubiquitin (Ubl) conjugation pathway by mediating the deneddylation of the cullin subunits of SCF-type E3 ligase complexes, leading to decrease the Ubl ligase activity of SCF-type complexes such as SCF, CSA or DDB2. The complex is also involved in phosphorylation of p53/TP53, c-jun/JUN, IkappaBalpha/NFKBIA, ITPK1 and IRF8/ICSBP, possibly via its association with CK2 and PKD kinases. CSN-dependent phosphorylation of TP53 and JUN promotes and protects degradation by the Ubl system, respectively. Suppresses G-protein- and mitogen-activated protein kinase-mediated signal transduction. In Mus musculus (Mouse), this protein is COP9 signalosome complex subunit 1 (Gps1).